Consider the following 37-residue polypeptide: MIEVSLFGIVLGLIPITLAGLFVTAYLQYRRGDQLDF.

The chain crosses the membrane as a helical span at residues 5 to 25 (SLFGIVLGLIPITLAGLFVTA).

Belongs to the PetG family. As to quaternary structure, the 4 large subunits of the cytochrome b6-f complex are cytochrome b6, subunit IV (17 kDa polypeptide, PetD), cytochrome f and the Rieske protein, while the 4 small subunits are PetG, PetL, PetM and PetN. The complex functions as a dimer.

It localises to the plastid. It is found in the chloroplast thylakoid membrane. Component of the cytochrome b6-f complex, which mediates electron transfer between photosystem II (PSII) and photosystem I (PSI), cyclic electron flow around PSI, and state transitions. PetG is required for either the stability or assembly of the cytochrome b6-f complex. This is Cytochrome b6-f complex subunit 5 from Arabis hirsuta (Hairy rock-cress).